The sequence spans 2968 residues: MNNNKSINDLSGNSNNNIANSNINNYNNLIKKEPIAIIGIGCRFPGNVSNYSDFVNIIKNGSDCLTKIPDDRWNADIISRKQWKLNNRIGGYLKNIDQFDNQFFGISPKEAQHIDPQQRLLLHLAIETLEDGKISLDEIKGKKVGVFIGSSSGDYLRGFDSSEINQFTTPGTNSSFLSNRLSYFLDVNGPSMTVNTACSASMVAIHLGLQSLWNGESELSMVGGVNIISSPLQSLDFGKAGLLNQETDGRCYSFDPRASGYVRSEGGGILLLKPLSAALRDNDEIYSLLLNSANNSNGKTPTGITSPRSLCQEKLIQQLLRESSDQFSIDDIGYFECHGTGTQMGDLNEITAIGKSIGMLKSHDDPLIIGSVKASIGHLEGASGICGVIKSIICLKEKILPQQCKFSSYNPKIPFETLNLKVLTKTQPWNNSKRICGVNSFGVGGSNSSLFLSSFDKSTTITEPTTTTTIESLPSSSSSFDNLSVSSSISTNNDNDKVSNIVNNRYGSSIDVITLSVTSPDKEDLKIRANDVLESIKTLDDNFKIRDISNLTNIRTSHFSNRVAIIGDSIDSIKLNLQSFIKGENNNNKSIILPLINNGNNNNNNNNNSSGSSSSSSNNNNICFIFSGQGQQWNKMIFDLYENNKTFKNEMNNFSKQFEMISGWSIIDKLYNSGGGGNEELINETWLAQPSIVAVQYSLIKLFSKDIGIEGSIVLGHSLGELMAAYYCGIINDFNDLLKLLYIRSTLQNKTNGSGRMHVCLSSKAEIEQLISQLGFNGRIVICGNNTMKSCTISGDNESMNQFTKLISSQQYGSVVHKEVRTNSAFHSHQMDIIKDEFFKLFNQYFPTNQISTNQIYDGKSFYSTCYGKYLTPIECKQLLSSPNYWWKNIRESVLFKESIEQILQNHQQSLTFIEITCHPILNYFLSQLLKSSSKSNTLLLSTLSKNSNSIDQLLILCSKLYVNNLSSIKWNWFYDKQQQQQSESLVSSNFKLPGRRWKLEKYWIENCQRQMDRIKPPMFISLDRKLFSVTPSFEVRLNQDRFQYLNDHQIQDIPLVPFSFYIELVYASIFNSISTTTTNTTASTMFEIENFTIDSSIIIDQKKSTLIGINFNSDLTKFEIGSINSIGSGSSSNNNFIENKWKIHSNGIIKYGTNYLKSNSKSNSFNESTTTTTTTTTTTKCFKSFNSNEFYNEIIKYNYNYKSTFQCVKEFKQFDKQGTFYYSEIQFKKNDKQVIDQLLSKQLPSDFRCIHPCLLDAVLQSAIIPATNKTNCSWIPIKIGKLSVNIPSNSYFNFKDQLLYCLIKPSTSTSTSPSTYFSSDIQVFDKKNNNLICELTNLEFKGINSSSSSSSSSSTINSNVEANYESKIEETNHDEDEDEELPLVSEYVWCKEELINQSIKFTDNYQTVIFCSTNLNGNDLLDSIITSALENGHDENKIFIVSPPPVESDQYNNRIIINYTNNESDFDALFAIINSTTSISGKSGLFSTRFIILPNFNSITFSSGNSTPLITNVNGNGNGKSCGGGGGSTNNTISNSSSSISSIDNGNNEDEEMVLKSFNDSNLSLFHLQKSIIKNNIKGRLFLITNGGQSISSSTPTSTYNDQSYVNLSQYQLIGQIRVFSNEYPIMECSMIDIQDSTRIDLITDQLNSTKLSKLEIAFRDNIGYSYKLLKPSIFDNSSLPSSSSEIETTATTKDEEKNNSINYNNNYYRVELSDNGIISDLKIKQFRQMKCGVGQVLVRVEMCTLNFRDILKSLGRDYDPIHLNSMGDEFSGKVIEIGEGVNNLSVGQYVFGINMSKSMGSFVCCNSDLVFPIPIPTPSSSSSSNENIDDQEIISKLLNQYCTIPIVFLTSWYSIVIQGRLKKGEKILIHSGCGGVGLATIQISMMIGAEIHVTVGSNEKKQYLIKEFGIDEKRIYSSRSLQFYNDLMVNTDGQGVDMVLNSLSGEYLEKSIQCLSQYGRFIEIGKKDIYSNSSIHLEPFKNNLSFFAVDIAQMTENRRDYLREIMIDQLLPCFKNGSLKPLNQHCFNSPCDLVKAIRFMSSGNHIGKILINWSNLNNDKQFINHHSVVHLPIQSFSNRSTYIFTGFGGLTQTLLKYFSTESDLTNVIIVSKNGLDDNSGSGSGNNEKLKLINQLKESGLNVLVEKCDLSSIKQVYKLFNKIFDNDASGSDSGDFSDIKGIFHFASLINDKRILKHNLESFNYVYNSKATSAWNLHQVSLKYNLNLDHFQTIGSVITILGNIGQSNYTCANRFVEGLTHLRIGMGLKSSCIHLASIPDVGMASNDNVLNDLNSMGFVPFQSLNEMNLGFKKLLSSPNPIVVLGEINVDRFIEATPNFRAKDNFIITSLFNRIDPLLLVNESQDFIINNNINNNGGGGDGSFDDLNQLEDEGQQGFGNGDGYVDDNIDSVSMLSGTSSIFDNDFYTKSIRGMLCDILELKDKDLNNTVSFSDYGLDSLLSSELSNTIQKNFSILIPSLTLVDNSTINSTVELIKNKLKNSTTSSISSSVSKKVSFKKNTQPLIIPTTAPISIIKTQSYIKSEIIESLPISSSTTIKPLVFDNLVYSSSSSNNSNSKNELTSPPPSAKRESVLPIISEDNNSDNDSSMATVIYEISPIAAPYHRYQTDVLKEITQLTPHKEFIDNIYKKSKIRSRYCFNDFSEKSMADINKLDAGERVALFREQTYQTVINAGKTVIERAGIDPMLISHVVGVTSTGIMAPSFDVVLIDKLGLSINTSRTMINFMGCGAAVNSMRAATAYAKLKPGTFVLVVAVEASATCMKFNFDSRSDLLSQAIFTDGCVATLVTCQPKSSLVGKLEIIDDLSYLMPDSRDALNLFIGPTGIDLDLRPELPIAINRHINSAITSWLKKNSLQKSDIEFFATHPGGAKIISAVHEGLGLSPEDLSDSYEVMKRYGNMIGVSTYYVLRRILDKNQTLLQEGSLGYNYGMAMAFSPGASIEAILFKLIK.

The region spanning 32–454 (KEPIAIIGIG…GSNSSLFLSS (423 aa)) is the Ketosynthase family 3 (KS3) domain. Catalysis depends on for beta-ketoacyl synthase activity residues Cys-198, His-338, and His-378. Positions 624–950 (FIFSGQGQQW…LSTLSKNSNS (327 aa)) are malonyl-CoA:ACP transacylase (MAT) domain. Ser-718 (for malonyltransferase activity) is an active-site residue. The N-terminal hotdog fold stretch occupies residues 1017-1157 (PPMFISLDRK…GIIKYGTNYL (141 aa)). Residues 1017–1350 (PPMFISLDRK…FKGINSSSSS (334 aa)) form the PKS/mFAS DH domain. Residues 1031 to 1345 (TPSFEVRLNQ…LTNLEFKGIN (315 aa)) are dehydratase (DH) domain. His-1049 (proton acceptor; for dehydratase activity) is an active-site residue. The segment at 1183–1350 (FKSFNSNEFY…FKGINSSSSS (168 aa)) is C-terminal hotdog fold. The active-site Proton donor; for dehydratase activity is Asp-1257. Residues 1522-1547 (SCGGGGGSTNNTISNSSSSISSIDNG) form a disordered region. The segment covering 1530–1547 (TNNTISNSSSSISSIDNG) has biased composition (low complexity). The tract at residues 1718 to 2053 (GIISDLKIKQ…SGNHIGKILI (336 aa)) is enoyl reductase (ER) domain. Residues 2083–2277 (TYIFTGFGGL…LKSSCIHLAS (195 aa)) are ketoreductase (KR) domain. The disordered stretch occupies residues 2379-2400 (GDGSFDDLNQLEDEGQQGFGNG). Residues 2421–2498 (FDNDFYTKSI…STVELIKNKL (78 aa)) form the Carrier domain. The residue at position 2458 (Ser-2458) is an O-(pantetheine 4'-phosphoryl)serine. A disordered region spans residues 2568–2589 (SSSSNNSNSKNELTSPPPSAKR). The tract at residues 2707 to 2968 (ISHVVGVTST…IEAILFKLIK (262 aa)) is chalcone synthase. Cys-2747 is a catalytic residue.

Pantetheine 4'-phosphate serves as cofactor.

It carries out the reaction (E)-4-coumaroyl-CoA + 3 malonyl-CoA + 3 H(+) = 2',4,4',6'-tetrahydroxychalcone + 3 CO2 + 4 CoA. It catalyses the reaction hexanoyl-CoA + 3 malonyl-CoA + 3 H(+) = 2,4,6-trihydroxyphenylhexan-1-one + 3 CO2 + 4 CoA. Its pathway is secondary metabolite biosynthesis; flavonoid biosynthesis. Its function is as follows. Polyketide synthase; part of the gene cluster that mediates the biosynthesis of DIF-1 (Differentiation Inducing Factor-1), a signal molecule involved in the differentiation of pstO (prestalk-O) cells. The three-step process begins with the formation of (2,4,6-trihydroxyphenyl)-1-hexan-1-one (THPH) by the polyketide synthase StlB. THPH is then dichlorinated by the flavin-dependent halogenase ChlA. The last step of DIF-1 biosynthesis is the O-methylation of dichloro-THPH (or des-methyl-DIF-1) by the methyltransferase DmtA to yield DIF-1. This Dictyostelium discoideum (Social amoeba) protein is Polyketide synthase 37 (StlB).